Consider the following 469-residue polypeptide: Glutamine synthetase (469 aa).

A GS beta-grasp domain is found at 13 to 97; sequence HEVKFVDLRF…IRCDILEPGT (85 aa). The GS catalytic domain occupies 105 to 469; the sequence is PRSIAKRAED…PVEFELYYSV (365 aa). 2 residues coordinate Mg(2+): Glu130 and Glu132. Glu208 lines the ATP pocket. The Mg(2+) site is built by Glu213 and Glu221. L-glutamate contacts are provided by residues 265–266 and Gly266; that span reads NG. His270 contacts Mg(2+). Residues 272-274 and Ser274 each bind ATP; that span reads HMS. The L-glutamate site is built by Arg322, Glu328, and Arg340. Positions 340, 345, and 353 each coordinate ATP. Glu358 is a Mg(2+) binding site. An L-glutamate-binding site is contributed by Arg360. An O-AMP-tyrosine modification is found at Tyr398.

The protein belongs to the glutamine synthetase family. Oligomer of 12 subunits arranged in the form of two hexagons. Requires Mn(2+) as cofactor.

Its subcellular location is the cytoplasm. It catalyses the reaction L-glutamate + NH4(+) + ATP = L-glutamine + ADP + phosphate + H(+). With respect to regulation, when cellular nitrogen levels are high, the C-terminal adenylyl transferase (AT) of GlnE inhibits GlnA by covalent transfer of an adenylyl group from ATP to Tyr-398. Conversely, when nitrogen levels are low, the N-terminal adenylyl removase (AR) of GlnE activates GlnA by removing the adenylyl group by phosphorolysis. The fully adenylated enzyme complex is inactive. Catalyzes the ATP-dependent biosynthesis of glutamine from glutamate and ammonia. In Salmonella typhi, this protein is Glutamine synthetase.